A 230-amino-acid polypeptide reads, in one-letter code: MNFWWLKFDDASTESLRNNIFTNNSITKNMRLNADTILNAQSYINPIGDRELNLRGLQIPVIENLGVTEDHYTSLDLSDNEIRVMGGFPRLETLRTLLLSKNRITQINDVKNIAKLETLVLTQNGIATLGALESLKSLVNLTAITLDGNPVQHVPRYRSYMISILPSLRMLDFQRVTQKERDEAEAMEFDVVPVTETDNLSAVDKAELRERLKNATTIQEIEEIEAMLKV.

LRR repeat units lie at residues 15-36, 48-69, 71-92, 93-114, and 115-136; these read SLRNNIFTNNSITKNMRLNADT, GDRELNLRGLQIPVIENLGVTE, HYTSLDLSDNEIRVMGGFPRLE, TLRTLLLSKNRITQINDVKNIA, and KLETLVLTQNGIATLGALESLK. The LRRCT domain occupies 149 to 187; sequence NPVQHVPRYRSYMISILPSLRMLDFQRVTQKERDEAEAM.

The protein belongs to the U2 small nuclear ribonucleoprotein A family. Associated with the spliceosome.

It localises to the nucleus. Involved in pre-mRNA splicing. The chain is U2 small nuclear ribonucleoprotein A' (LEA1) from Yarrowia lipolytica (strain CLIB 122 / E 150) (Yeast).